Consider the following 1141-residue polypeptide: Isoleucine--tRNA ligase (1141 aa).

The 'HIGH' region signature appears at 50 to 60 (PSANGMPGIHH). The 'KMSKS' region signature appears at 689–693 (KMSKR). Lys-692 provides a ligand contact to ATP.

This sequence belongs to the class-I aminoacyl-tRNA synthetase family. IleS type 2 subfamily. Monomer. Zn(2+) serves as cofactor.

The protein localises to the cytoplasm. It catalyses the reaction tRNA(Ile) + L-isoleucine + ATP = L-isoleucyl-tRNA(Ile) + AMP + diphosphate. Catalyzes the attachment of isoleucine to tRNA(Ile). As IleRS can inadvertently accommodate and process structurally similar amino acids such as valine, to avoid such errors it has two additional distinct tRNA(Ile)-dependent editing activities. One activity is designated as 'pretransfer' editing and involves the hydrolysis of activated Val-AMP. The other activity is designated 'posttransfer' editing and involves deacylation of mischarged Val-tRNA(Ile). In Bacteroides fragilis (strain YCH46), this protein is Isoleucine--tRNA ligase.